Consider the following 249-residue polypeptide: Phosphoserine phosphatase (249 aa).

The protein belongs to the HAD-like hydrolase superfamily. As to quaternary structure, homodimer. Mg(2+) serves as cofactor. The cofactor is Co(2+).

The catalysed reaction is O-phospho-L-serine + H2O = L-serine + phosphate. It catalyses the reaction O-phospho-D-serine + H2O = D-serine + phosphate. It participates in amino-acid biosynthesis; L-serine biosynthesis; L-serine from 3-phospho-D-glycerate: step 3/3. Functionally, catalyzes the last step of the phosphorylated serine biosynthetic pathway, i.e. dephosphorylation of O-phospho-L-serine to form L-serine. Is also able to dephosphorylate O-phospho-D-serine with similar efficiency. Displays a poor activity on L-phosphothreonine, and cannot use L-phosphotyrosine, pyridoxal phosphate, glucose 6-phosphate, or fructose 6-phosphate as substrates. This chain is Phosphoserine phosphatase, found in Thermus thermophilus (strain ATCC BAA-163 / DSM 7039 / HB27).